We begin with the raw amino-acid sequence, 192 residues long: Small ribosomal subunit protein eS7 (192 aa).

The protein belongs to the eukaryotic ribosomal protein eS7 family.

The sequence is that of Small ribosomal subunit protein eS7 (RpS7) from Anopheles gambiae (African malaria mosquito).